We begin with the raw amino-acid sequence, 87 residues long: Large ribosomal subunit protein bL31B (87 aa).

It belongs to the bacterial ribosomal protein bL31 family. Type B subfamily. As to quaternary structure, part of the 50S ribosomal subunit.

This chain is Large ribosomal subunit protein bL31B, found in Escherichia coli O9:H4 (strain HS).